Reading from the N-terminus, the 207-residue chain is Succinyl-CoA:3-ketoacid coenzyme A transferase subunit B (207 aa).

Glu43 is a catalytic residue.

It belongs to the 3-oxoacid CoA-transferase subunit B family. Heterodimer of a subunit A and a subunit B.

The catalysed reaction is a 3-oxo acid + succinyl-CoA = a 3-oxoacyl-CoA + succinate. The sequence is that of Succinyl-CoA:3-ketoacid coenzyme A transferase subunit B (scoB) from Helicobacter pylori (strain ATCC 700392 / 26695) (Campylobacter pylori).